A 597-amino-acid chain; its full sequence is Formate--tetrahydrofolate ligase (597 aa).

Residue 84–91 (TPLGEGKS) coordinates ATP.

This sequence belongs to the formate--tetrahydrofolate ligase family.

The enzyme catalyses (6S)-5,6,7,8-tetrahydrofolate + formate + ATP = (6R)-10-formyltetrahydrofolate + ADP + phosphate. It functions in the pathway one-carbon metabolism; tetrahydrofolate interconversion. This Dehalococcoides mccartyi (strain ATCC BAA-2266 / KCTC 15142 / 195) (Dehalococcoides ethenogenes (strain 195)) protein is Formate--tetrahydrofolate ligase.